The following is a 37-amino-acid chain: Large ribosomal subunit protein bL36 (37 aa).

It belongs to the bacterial ribosomal protein bL36 family.

This chain is Large ribosomal subunit protein bL36, found in Deinococcus deserti (strain DSM 17065 / CIP 109153 / LMG 22923 / VCD115).